Here is a 35-residue protein sequence, read N- to C-terminus: UPF0387 membrane protein YohO (35 aa).

The helical transmembrane segment at 6–26 (IGVIALFLLMAIGGIGGVMLA) threads the bilayer.

Belongs to the UPF0387 family.

The protein localises to the cell inner membrane. This chain is UPF0387 membrane protein YohO, found in Salmonella paratyphi A (strain ATCC 9150 / SARB42).